The chain runs to 179 residues: uncharacterized protein (179 aa).

Residues 1–27 (MNKSMIQSGGYVLLAGLILAMSSTLFA) form the signal peptide. Residues Cys-43 and Cys-83 are joined by a disulfide bond.

Belongs to the fimbrial protein family.

The protein resides in the fimbrium. Functionally, part of the yfcOPQRSUV fimbrial operon. Could contribute to adhesion to various surfaces in specific environmental niches. Increases adhesion to eukaryotic T24 bladder epithelial cells in the absence of fim genes. This is an uncharacterized protein from Escherichia coli (strain K12).